The chain runs to 195 residues: Imidazoleglycerol-phosphate dehydratase (195 aa).

It belongs to the imidazoleglycerol-phosphate dehydratase family.

It is found in the cytoplasm. It carries out the reaction D-erythro-1-(imidazol-4-yl)glycerol 3-phosphate = 3-(imidazol-4-yl)-2-oxopropyl phosphate + H2O. Its pathway is amino-acid biosynthesis; L-histidine biosynthesis; L-histidine from 5-phospho-alpha-D-ribose 1-diphosphate: step 6/9. In Koribacter versatilis (strain Ellin345), this protein is Imidazoleglycerol-phosphate dehydratase.